A 91-amino-acid polypeptide reads, in one-letter code: Small ribosomal subunit protein uS19 (91 aa).

It belongs to the universal ribosomal protein uS19 family.

In terms of biological role, protein S19 forms a complex with S13 that binds strongly to the 16S ribosomal RNA. This is Small ribosomal subunit protein uS19 from Ectopseudomonas mendocina (strain ymp) (Pseudomonas mendocina).